A 442-amino-acid chain; its full sequence is UDP-N-acetylmuramate--L-alanine ligase (442 aa).

109–115 (GAHGKTS) lines the ATP pocket.

It belongs to the MurCDEF family.

It is found in the cytoplasm. The catalysed reaction is UDP-N-acetyl-alpha-D-muramate + L-alanine + ATP = UDP-N-acetyl-alpha-D-muramoyl-L-alanine + ADP + phosphate + H(+). It participates in cell wall biogenesis; peptidoglycan biosynthesis. Functionally, cell wall formation. This is UDP-N-acetylmuramate--L-alanine ligase from Streptococcus pyogenes serotype M6 (strain ATCC BAA-946 / MGAS10394).